Reading from the N-terminus, the 495-residue chain is Germacrene A acid 8-beta-hydroxylase (495 aa).

Residues 3 to 23 form a helical; Signal-anchor for type II membrane protein membrane-spanning segment; it reads PFTTFSLVASSLILLICWALV. The N-linked (GlcNAc...) asparagine glycan is linked to Asn103. Cys433 provides a ligand contact to heme.

The protein belongs to the cytochrome P450 family. Heme serves as cofactor. As to expression, mostly expressed in leaves and flowers, and, to a lower extent, in roots and stems.

It localises to the membrane. The enzyme catalyses germacra-1(10),4,11(13)-trien-12-oate + reduced [NADPH--hemoprotein reductase] + O2 = 8beta-hydroxygermacra-1(10),4,11(13)-trien-12-oate + oxidized [NADPH--hemoprotein reductase] + H2O + H(+). It carries out the reaction germacra-1(10),4,11(13)-trien-12-oate + reduced [NADPH--hemoprotein reductase] + O2 = 8-epi-inunolide + oxidized [NADPH--hemoprotein reductase] + 2 H2O. The catalysed reaction is germacra-1(10),4,11(13)-trien-12-oate + reduced [NADPH--hemoprotein reductase] + O2 = 8alpha-hydroxygermacra-1(10),4,11(13)-trien-12-oate + oxidized [NADPH--hemoprotein reductase] + H2O + H(+). It functions in the pathway secondary metabolite biosynthesis; terpenoid biosynthesis. Its function is as follows. Involved in the biosynthesis of germacrene-derived sesquiterpene lactones. Hydroxylates germacrene A acid to 8-beta-hydroxy-germacrene A and 8-alpha-hydroxy-germacrene A acids. Unlike 8-alpha-hydroxy-germacrene A acid with is spontaneously converted into inunolide (12, 8-alpha), 8-beta-hydroxy-germacrene A cannot undergo spontaneous lactonization. The protein is Germacrene A acid 8-beta-hydroxylase of Inula hupehensis (Inula helianthus-aquatilis subsp. hupehensis).